Here is a 383-residue protein sequence, read N- to C-terminus: MKNKLPPFIEIYRALIATPSISATEEALDQSNADLITLLADWFKDLGFNVEVQPVPGTRNKFNMLASTGQGAGGLLLAGHTDTVPFDDGRWTRDPFTLTEHDGKLYGLGTADMKGFFAFILDALRDVDVTKLAKPLYILATADEETSMAGARYFAETTALRPDCAIIGEPTSLQPVRAHKGHISNAIRIQGQSGHSSDPARGVNAIELMHDAIGHILQLRDKLKERYHYEAFTVPYPTLNLGHIHGGDASNRICACCELHMDIRPLPGMTLNELNGLLNDALAPVSERWPGRLTVDELHPPIPGYECPPNHQLVEVVEKLLGAKTEVVNYCTEAPFIQTLCPTLVLGPGSINQAHQPDEYLETRFIKPTRELITQVIHHFCWH.

Residue His80 participates in Zn(2+) binding. Asp82 is a catalytic residue. Residue Asp112 participates in Zn(2+) binding. The active site involves Glu144. Residues Glu145, Glu169, and His355 each coordinate Zn(2+).

This sequence belongs to the peptidase M20A family. ArgE subfamily. As to quaternary structure, homodimer. Zn(2+) is required as a cofactor. Co(2+) serves as cofactor. It depends on glutathione as a cofactor.

It is found in the cytoplasm. It carries out the reaction N(2)-acetyl-L-ornithine + H2O = L-ornithine + acetate. It participates in amino-acid biosynthesis; L-arginine biosynthesis; L-ornithine from N(2)-acetyl-L-ornithine (linear): step 1/1. Catalyzes the hydrolysis of the amide bond of N(2)-acetylated L-amino acids. Cleaves the acetyl group from N-acetyl-L-ornithine to form L-ornithine, an intermediate in L-arginine biosynthesis pathway, and a branchpoint in the synthesis of polyamines. The sequence is that of Acetylornithine deacetylase from Escherichia coli (strain SMS-3-5 / SECEC).